The sequence spans 267 residues: U6 snRNA phosphodiesterase 1 (267 aa).

Residues 1–13 (MSSAPLVGYSSSG) are compositionally biased toward polar residues. Residues 1–74 (MSSAPLVGYS…DSAKHGGRIR (74 aa)) are disordered. Histidine 122 (proton acceptor) is an active-site residue. An AMP-binding site is contributed by 122 to 124 (HVS). Residues glutamine 166, tyrosine 204, and 208–212 (SFHIS) contribute to the UMP site. Residues tyrosine 204 and 206–212 (DPSFHIS) each bind AMP. The active-site Proton donor is the histidine 210.

Belongs to the 2H phosphoesterase superfamily. USB1 family. Interacts with PLRG1, CDC5L and PRPF19.

It is found in the nucleus. It carries out the reaction a 3'-end uridylyl-uridine-RNA = a 3'-end 2',3'-cyclophospho-uridine-RNA + uridine. The catalysed reaction is a 3'-end uridylyl-adenosine-RNA = a 3'-end 2',3'-cyclophospho-uridine-RNA + adenosine. 3'-5' RNA exonuclease that trims the 3' end of oligo(U) and oligo(A) tracts of the pre-U6 small nuclear RNA (snRNA) molecule, leading to the formation of a mature U6 snRNA 3' end-terminated with a 2',3'-cyclic phosphate. Participates in the U6 snRNA 3' end processing that prevents U6 snRNA degradation. In addition also removes uridines from the 3' end of U6atac snRNA and possibly the vault RNA VTRNA1-1. This is U6 snRNA phosphodiesterase 1 from Mus musculus (Mouse).